The primary structure comprises 445 residues: 2-oxoisovalerate dehydrogenase subunit alpha, mitochondrial (445 aa).

Residues 1–45 constitute a mitochondrion transit peptide; it reads MAVAIAAARVWRLNRGLSQAALLLLRRPGARGLARSHPRRQQQQF. Positions 33-54 are disordered; the sequence is LARSHPRRQQQQFSSLDDKPQF. Thiamine diphosphate is bound by residues Y158 and R159. S206 provides a ligand contact to K(+). Position 207 (S207) interacts with thiamine diphosphate. Residues P208, T211, and Q212 each contribute to the K(+) site. E238 is a Mg(2+) binding site. The thiamine diphosphate site is built by G239, A240, and R265. N267 and Y269 together coordinate Mg(2+). H336 contacts thiamine diphosphate. S337 bears the Phosphoserine; by BCKDK mark. T338 is subject to Phosphothreonine. Phosphoserine occurs at positions 339 and 347. N6-acetyllysine; alternate is present on K356. K356 is modified (N6-succinyllysine; alternate). Residue K380 is modified to N6-succinyllysine.

This sequence belongs to the BCKDHA family. Heterotetramer of 2 alpha/BCKDHA and 2 beta chains/BCKDHB that forms the branched-chain alpha-keto acid decarboxylase (E1) component of the BCKD complex. The branched-chain alpha-ketoacid dehydrogenase is a large complex composed of three major building blocks E1, E2 and E3. It is organized around E2, a 24-meric cubic core composed of DBT, to which are associated 6 to 12 copies of E1, and approximately 6 copies of the dehydrogenase E3, a DLD dimer. Interacts with PPM1K. It depends on thiamine diphosphate as a cofactor. Mg(2+) serves as cofactor. Phosphorylated at Ser-337 by BCKDK and dephosphorylated by protein phosphatase PPM1K.

The protein localises to the mitochondrion matrix. It carries out the reaction N(6)-[(R)-lipoyl]-L-lysyl-[protein] + 3-methyl-2-oxobutanoate + H(+) = N(6)-[(R)-S(8)-2-methylpropanoyldihydrolipoyl]-L-lysyl-[protein] + CO2. Functionally, together with BCKDHB forms the heterotetrameric E1 subunit of the mitochondrial branched-chain alpha-ketoacid dehydrogenase (BCKD) complex. The BCKD complex catalyzes the multi-step oxidative decarboxylation of alpha-ketoacids derived from the branched-chain amino-acids valine, leucine and isoleucine producing CO2 and acyl-CoA which is subsequently utilized to produce energy. The E1 subunit catalyzes the first step with the decarboxylation of the alpha-ketoacid forming an enzyme-product intermediate. A reductive acylation mediated by the lipoylamide cofactor of E2 extracts the acyl group from the E1 active site for the next step of the reaction. The chain is 2-oxoisovalerate dehydrogenase subunit alpha, mitochondrial (BCKDHA) from Pan troglodytes (Chimpanzee).